The primary structure comprises 563 residues: Dihydroxy-acid dehydratase (563 aa).

Asp78 provides a ligand contact to Mg(2+). Cys119 provides a ligand contact to [2Fe-2S] cluster. The Mg(2+) site is built by Asp120 and Lys121. Lys121 is modified (N6-carboxylysine). Cys191 is a binding site for [2Fe-2S] cluster. Glu442 provides a ligand contact to Mg(2+). Residue Ser468 is the Proton acceptor of the active site.

The protein belongs to the IlvD/Edd family. Homodimer. The cofactor is [2Fe-2S] cluster. It depends on Mg(2+) as a cofactor.

It carries out the reaction (2R)-2,3-dihydroxy-3-methylbutanoate = 3-methyl-2-oxobutanoate + H2O. It catalyses the reaction (2R,3R)-2,3-dihydroxy-3-methylpentanoate = (S)-3-methyl-2-oxopentanoate + H2O. It functions in the pathway amino-acid biosynthesis; L-isoleucine biosynthesis; L-isoleucine from 2-oxobutanoate: step 3/4. It participates in amino-acid biosynthesis; L-valine biosynthesis; L-valine from pyruvate: step 3/4. In terms of biological role, functions in the biosynthesis of branched-chain amino acids. Catalyzes the dehydration of (2R,3R)-2,3-dihydroxy-3-methylpentanoate (2,3-dihydroxy-3-methylvalerate) into 2-oxo-3-methylpentanoate (2-oxo-3-methylvalerate) and of (2R)-2,3-dihydroxy-3-methylbutanoate (2,3-dihydroxyisovalerate) into 2-oxo-3-methylbutanoate (2-oxoisovalerate), the penultimate precursor to L-isoleucine and L-valine, respectively. In Desulfitobacterium hafniense (strain DSM 10664 / DCB-2), this protein is Dihydroxy-acid dehydratase.